Here is a 477-residue protein sequence, read N- to C-terminus: Oleate hydroxylase FAH12 (477 aa).

Residues 26–48 form a disordered region; it reads YESSAAVSPAESPRTSASSTSLS. The span at 27–48 shows a compositional bias: low complexity; sequence ESSAAVSPAESPRTSASSTSLS. The next 2 helical transmembrane spans lie at 101 to 118 and 133 to 153; these read AYVLRDLLCLSTTFYLFH and FVLWSIYTVLQGLFATGLWVI. A Histidine box-1 motif is present at residues 155-159; it reads HECGH. A helical membrane pass occupies residues 167–187; that stretch reads FISDLTGWVIHSALLVPYFSW. The Histidine box-2 signature appears at 191 to 195; the sequence is HSAHH. The next 3 membrane-spanning stretches (helical) occupy residues 234 to 254, 299 to 319, and 327 to 347; these read PIYTALHLVGKQLIGWPSYLM, YIVLSDIGLGLAIAALVYLGN, and AVWYFLPYLWVNHWLVAITFL.

It belongs to the fatty acid desaturase type 1 family.

Its subcellular location is the microsome membrane. The enzyme catalyses (9Z)-octadecenoate + AH2 + O2 = (12R)-hydroxy-(9Z)-octadecenoate + A + H2O. It participates in lipid metabolism; monounsaturated fatty acid biosynthesis. In terms of biological role, oleate hydroxylase involved in the biosynthesis of ricinoleate (12-hydroxy-cis-9-octadecenoate), that is present at high levels in C.purpurea sclerotium tissue. Exhibits delta(12) hydroxylase activity on 16C and 18C monounsaturated fatty acids (i.e. oleic and palmitoleic acids), and, to a lower extent, gamma(3) hydroxylase activity on ricinoleate. This Claviceps purpurea (Ergot fungus) protein is Oleate hydroxylase FAH12.